We begin with the raw amino-acid sequence, 384 residues long: Galactokinase (384 aa).

Substrate is bound at residue 35–38 (EHTD). ATP contacts are provided by residues S69 and 125–131 (GAGLSSS). Residues S131 and E163 each coordinate Mg(2+). D175 serves as the catalytic Proton acceptor. Y224 is a substrate binding site.

It belongs to the GHMP kinase family. GalK subfamily.

It localises to the cytoplasm. It catalyses the reaction alpha-D-galactose + ATP = alpha-D-galactose 1-phosphate + ADP + H(+). It functions in the pathway carbohydrate metabolism; galactose metabolism. In terms of biological role, catalyzes the transfer of the gamma-phosphate of ATP to D-galactose to form alpha-D-galactose-1-phosphate (Gal-1-P). The protein is Galactokinase of Aliivibrio fischeri (strain ATCC 700601 / ES114) (Vibrio fischeri).